Reading from the N-terminus, the 60-residue chain is Large ribosomal subunit protein bL32 (60 aa).

Over residues 1–16 the composition is skewed to basic residues; that stretch reads MAVPRRKTSPSRRGMR. The tract at residues 1–60 is disordered; it reads MAVPRRKTSPSRRGMRRSADALKRPTYAEDKDSGELRRPHHLDLKTGMYKGRQVIKKKDA. Residues 17 to 44 are compositionally biased toward basic and acidic residues; that stretch reads RSADALKRPTYAEDKDSGELRRPHHLDL.

The protein belongs to the bacterial ribosomal protein bL32 family.

In Rhodopseudomonas palustris (strain BisB5), this protein is Large ribosomal subunit protein bL32.